Here is a 225-residue protein sequence, read N- to C-terminus: Ribonuclease 3 (225 aa).

The 123-residue stretch at 7–129 (IPRLCRTLGY…IIGAIYLDSD (123 aa)) folds into the RNase III domain. E42 is a Mg(2+) binding site. D46 is an active-site residue. D115 and E118 together coordinate Mg(2+). The active site involves E118. One can recognise a DRBM domain in the interval 155–225 (DPKTLLQEHL…AAQVLELIKK (71 aa)).

It belongs to the ribonuclease III family. In terms of assembly, homodimer. It depends on Mg(2+) as a cofactor.

The protein resides in the cytoplasm. The enzyme catalyses Endonucleolytic cleavage to 5'-phosphomonoester.. Functionally, digests double-stranded RNA. Involved in the processing of primary rRNA transcript to yield the immediate precursors to the large and small rRNAs (23S and 16S). Processes some mRNAs, and tRNAs when they are encoded in the rRNA operon. Processes pre-crRNA and tracrRNA of type II CRISPR loci if present in the organism. The protein is Ribonuclease 3 of Shewanella piezotolerans (strain WP3 / JCM 13877).